The sequence spans 126 residues: MRSSLLLGLTVVLLLGVTVPPCMAGQALNKLMPKIVSAIIYMIGQPNAGVTFLGHQCLVESTRQPDGFYTAKMWCTSWTSDNPIVGEGRSRVELEALKGSIRNFVQTASDYKKFTIEEVEDWIASY.

An N-terminal signal peptide occupies residues 1–24; sequence MRSSLLLGLTVVLLLGVTVPPCMA.

Strongly expressed in gills, hemocytes and reproductive tract, with weaker expression in muscle, heart and digestive tract. Not detected in eyes and hepatopancreas (at protein level).

It is found in the secreted. Its function is as follows. Has antibacterial activity against the Gram-positive bacteria E.coli (MIC&lt;50 ug/ml) and P.aeruginosa (MIC&lt;25 ug/ml), and the Gram-negative bacteria S.aureus (MIC&lt;100 ug/ml) and S.pyogenes (MIC&lt;50 ug/ml). The sequence is that of Antimicrobial protein 1 from Scylla serrata (Mud crab).